A 466-amino-acid chain; its full sequence is Phytase A (466 aa).

The first 19 residues, 1-19 (MGVFVVLLSIATLFGSTSG), serve as a signal peptide directing secretion. N-linked (GlcNAc...) asparagine glycosylation occurs at N27. A disulfide bond links C31 and C40. Y51, R81, H82, R85, and T88 together coordinate 1D-myo-inositol hexakisphosphate. Intrachain disulfides connect C71/C414, C215/C465, C264/C282, and C436/C444. Catalysis depends on H82, which acts as the Nucleophile. N105 and N120 each carry an N-linked (GlcNAc...) asparagine glycan. Position 165 (R165) interacts with 1D-myo-inositol hexakisphosphate. 2 N-linked (GlcNAc...) asparagine glycosylation sites follow: N207 and N230. K301 contributes to the 1D-myo-inositol hexakisphosphate binding site. N339 and N352 each carry an N-linked (GlcNAc...) asparagine glycan. Positions 361 and 362 each coordinate 1D-myo-inositol hexakisphosphate. N376 carries N-linked (GlcNAc...) asparagine glycosylation.

It belongs to the histidine acid phosphatase family. As to quaternary structure, monomer.

Its subcellular location is the secreted. The enzyme catalyses 1D-myo-inositol hexakisphosphate + H2O = 1D-myo-inositol 1,2,4,5,6-pentakisphosphate + phosphate. It carries out the reaction 1D-myo-inositol 1,2,4,5,6-pentakisphosphate + H2O = 1D-myo-inositol 1,2,5,6-tetrakisphosphate + phosphate. It catalyses the reaction 1D-myo-inositol 1,2,5,6-tetrakisphosphate + H2O = 1D-myo-inositol 1,2,6-trisphosphate + phosphate. The catalysed reaction is 1D-myo-inositol 1,2,6-trisphosphate + H2O = 1D-myo-inositol 1,2-bisphosphate + phosphate. The enzyme catalyses 1D-myo-inositol 1,2-bisphosphate + H2O = 1D-myo-inositol 2-phosphate + phosphate. Catalyzes the phosphate monoester hydrolysis of phytic acid (myo-inositol hexakisphosphate), which results in the stepwise formation of myo-inositol pentakis-, tetrakis-, tris-, bis-, and monophosphates, as well as the liberation of inorganic phosphate. Myo-inositol 2-monophosphate is the end product. Has a broad substrate specificity and is also able to dephosphorylate other classic acid phosphatase substrates such as p-nitrophenyl phosphate, phenyl phosphate, fructose 1,6-bisphosphate, glucose 6-phosphate, 3-phosphoglycerate, as well as ADP and ATP. This Aspergillus terreus protein is Phytase A.